The chain runs to 285 residues: PHO85 cyclin-7 (285 aa).

The span at 1–14 (MELSSPSKKTTTSP) shows a compositional bias: low complexity. The tract at residues 1–42 (MELSSPSKKTTTSPINIPGGNRDNLIIGPHSHSFKTDPFSSN) is disordered. Ser69 carries the post-translational modification Phosphoserine.

This sequence belongs to the cyclin family. PHO80 subfamily. Forms a cyclin-CDK complex with PHO85. Interacts with the substrate proteins MMR1 and YJL084C. Interacts with the CDK inhibitor (CKI) PHO81.

It is found in the cytoplasm. With respect to regulation, the PCL7-PHO85 cyclin-CDK is inhibited by PHO81 in low-phosphate conditions. Its function is as follows. Cyclin partner of the cyclin-dependent kinase (CDK) PHO85. Together with cyclin PCL6, controls glycogen phosphorylase and glycogen synthase activities in response to nutrient availablility. The PCL7-PHO85 cyclin-CDK holoenzyme has GLC8 kinase activity and phosphorylates and inactivates the phosphatase PP1-2 inhibitor GLC8, causing activation of PP1-2, which then dephosphorylates and activates glycogen phosphorylase. PCL7-PHO85 also phosphorylates MMR1 and YJL084C. In Saccharomyces cerevisiae (strain ATCC 204508 / S288c) (Baker's yeast), this protein is PHO85 cyclin-7 (PCL7).